A 413-amino-acid chain; its full sequence is MERAAILPSVNQNYLLCPSRAFSTRLHSSTRNLSPPSFASIKLQHSSSSVSSNGGISLTRCNAVSSNSSSTLVTELADIDWDTVGFGLKPADYMYVMKCNIDGEFSKGELQRFGNIEISPSAGVLNYGQGLFEGLKAYRKKDGNNILLFRPEENAKRMRNGAERMCMPAPTVEQFVEAVTETVLANKRWVPPPGKGSLYVRPLLMGTGAVLGLAPAPEYTFIIYVSPVGNYFKEGVAPINLIVENEFHRATPGGTGGVKTIGNYAAVLKAQSIAKAKGYSDVLYLDCIYKRYLEEVSSCNIFIVKDNVISTPEIKGTILPGITRKSMIDVARTQGFQVEERNVTVDELLEADEVFCTGTAVVVSPVGSVTYKGKRVSYGEGTFGTVSKQLYTVLTSLQMGLIEDNMKWTVNLS.

Residues 1–60 (MERAAILPSVNQNYLLCPSRAFSTRLHSSTRNLSPPSFASIKLQHSSSSVSSNGGISLTR) constitute a chloroplast transit peptide. The residue at position 259 (K259) is an N6-(pyridoxal phosphate)lysine.

Belongs to the class-IV pyridoxal-phosphate-dependent aminotransferase family. Pyridoxal 5'-phosphate is required as a cofactor. Expressed in the phloem cells.

The protein localises to the plastid. The protein resides in the chloroplast. It catalyses the reaction L-leucine + 2-oxoglutarate = 4-methyl-2-oxopentanoate + L-glutamate. The catalysed reaction is L-isoleucine + 2-oxoglutarate = (S)-3-methyl-2-oxopentanoate + L-glutamate. It carries out the reaction L-valine + 2-oxoglutarate = 3-methyl-2-oxobutanoate + L-glutamate. The enzyme catalyses a 2-oxocarboxylate + L-methionine = 4-methylsulfanyl-2-oxobutanoate + an L-alpha-amino acid. The protein operates within amino-acid biosynthesis; L-isoleucine biosynthesis; L-isoleucine from 2-oxobutanoate: step 4/4. It functions in the pathway amino-acid biosynthesis; L-leucine biosynthesis; L-leucine from 3-methyl-2-oxobutanoate: step 4/4. It participates in amino-acid biosynthesis; L-valine biosynthesis; L-valine from pyruvate: step 4/4. Its activity is regulated as follows. Inhibited by Ser- or Thr-derived imine. Its function is as follows. Converts 2-oxo acids to branched-chain amino acids. Acts on leucine, isoleucine and valine. Also involved in methionine chain elongation cycle of aliphatic glucosinolate formation. Catalyzes the conversion of 5-methylthiopentyl-2-oxo and 6-methylthiohexyl-2-oxo acids to their respective Met derivatives, homomethionine and dihomo-methionine, respectively. This chain is Branched-chain-amino-acid aminotransferase 3, chloroplastic, found in Arabidopsis thaliana (Mouse-ear cress).